The chain runs to 288 residues: Acetyl-coenzyme A carboxylase carboxyl transferase subunit beta (288 aa).

The CoA carboxyltransferase N-terminal domain maps to 32 to 288 (LFAKCPACKH…LELHTEVENV (257 aa)). Zn(2+)-binding residues include C36, C39, C54, and C57. Residues 36–57 (CPACKHTIYQKDLGKNKVCPNC) form a C4-type zinc finger.

It belongs to the AccD/PCCB family. Acetyl-CoA carboxylase is a heterohexamer composed of biotin carboxyl carrier protein (AccB), biotin carboxylase (AccC) and two subunits each of ACCase subunit alpha (AccA) and ACCase subunit beta (AccD). Zn(2+) is required as a cofactor.

It localises to the cytoplasm. The enzyme catalyses N(6)-carboxybiotinyl-L-lysyl-[protein] + acetyl-CoA = N(6)-biotinyl-L-lysyl-[protein] + malonyl-CoA. The protein operates within lipid metabolism; malonyl-CoA biosynthesis; malonyl-CoA from acetyl-CoA: step 1/1. Functionally, component of the acetyl coenzyme A carboxylase (ACC) complex. Biotin carboxylase (BC) catalyzes the carboxylation of biotin on its carrier protein (BCCP) and then the CO(2) group is transferred by the transcarboxylase to acetyl-CoA to form malonyl-CoA. This Lactococcus lactis subsp. cremoris (strain SK11) protein is Acetyl-coenzyme A carboxylase carboxyl transferase subunit beta.